The sequence spans 254 residues: CRISPR-associated endoribonuclease Cas6 1 (254 aa).

Catalysis depends on Tyr32, which acts as the Proton acceptor. The active-site Proton donor is the His47.

The protein belongs to the CRISPR-associated protein Cas6/Cse3/CasE family.

CRISPR (clustered regularly interspaced short palindromic repeat) is an adaptive immune system that provides protection against mobile genetic elements (viruses, transposable elements and conjugative plasmids). CRISPR clusters contain sequences complementary to antecedent mobile elements and target invading nucleic acids. CRISPR clusters are transcribed and processed into CRISPR RNA (crRNA). This protein processes pre-crRNA into individual crRNA units. The chain is CRISPR-associated endoribonuclease Cas6 1 (cas6a) from Methanocaldococcus jannaschii (strain ATCC 43067 / DSM 2661 / JAL-1 / JCM 10045 / NBRC 100440) (Methanococcus jannaschii).